A 419-amino-acid polypeptide reads, in one-letter code: CCA-adding enzyme (419 aa).

2 residues coordinate ATP: Ser-54 and Arg-57. CTP-binding residues include Ser-54 and Arg-57. Positions 66, 68, and 118 each coordinate Mg(2+). ATP contacts are provided by His-141, Lys-161, and Tyr-170. His-141, Lys-161, and Tyr-170 together coordinate CTP.

Belongs to the tRNA nucleotidyltransferase/poly(A) polymerase family. Archaeal CCA-adding enzyme subfamily. Homodimer. The cofactor is Mg(2+).

The enzyme catalyses a tRNA precursor + 2 CTP + ATP = a tRNA with a 3' CCA end + 3 diphosphate. It catalyses the reaction a tRNA with a 3' CCA end + 2 CTP + ATP = a tRNA with a 3' CCACCA end + 3 diphosphate. Its function is as follows. Catalyzes the addition and repair of the essential 3'-terminal CCA sequence in tRNAs without using a nucleic acid template. Adds these three nucleotides in the order of C, C, and A to the tRNA nucleotide-73, using CTP and ATP as substrates and producing inorganic pyrophosphate. tRNA 3'-terminal CCA addition is required both for tRNA processing and repair. Also involved in tRNA surveillance by mediating tandem CCA addition to generate a CCACCA at the 3' terminus of unstable tRNAs. While stable tRNAs receive only 3'-terminal CCA, unstable tRNAs are marked with CCACCA and rapidly degraded. The chain is CCA-adding enzyme from Pyrobaculum aerophilum (strain ATCC 51768 / DSM 7523 / JCM 9630 / CIP 104966 / NBRC 100827 / IM2).